We begin with the raw amino-acid sequence, 389 residues long: Rhizopuspepsin-1 (389 aa).

The signal sequence occupies residues 1–21; that stretch reads MKFTLISSCVALAAMTLAVEA. Residues 22-66 constitute a propeptide, activation peptide; the sequence is APNGKKINIPLAKNNSYKPSAKNALNKALAKYNRRKVGSGGITTE. The region spanning 82–385 is the Peptidase A1 domain; that stretch reads YYGEVTVGTP…NQEVPEVQIA (304 aa). D100 is a catalytic residue. C113 and C116 are oxidised to a cystine. D283 is a catalytic residue. Cysteines 317 and 350 form a disulfide.

The protein belongs to the peptidase A1 family.

The enzyme catalyses Hydrolysis of proteins with broad specificity similar to that of pepsin A, preferring hydrophobic residues at P1 and P1'. Clots milk and activates trypsinogen. Does not cleave 4-Gln-|-His-5, but does cleave 10-His-|-Leu-11 and 12-Val-|-Glu-13 in B chain of insulin.. This chain is Rhizopuspepsin-1 (RNAP), found in Rhizopus niveus.